The sequence spans 586 residues: 2-succinyl-5-enolpyruvyl-6-hydroxy-3-cyclohexene-1-carboxylate synthase (586 aa).

Belongs to the TPP enzyme family. MenD subfamily. Homodimer. The cofactor is Mg(2+). Mn(2+) serves as cofactor. Requires thiamine diphosphate as cofactor.

It carries out the reaction isochorismate + 2-oxoglutarate + H(+) = 5-enolpyruvoyl-6-hydroxy-2-succinyl-cyclohex-3-ene-1-carboxylate + CO2. The protein operates within quinol/quinone metabolism; 1,4-dihydroxy-2-naphthoate biosynthesis; 1,4-dihydroxy-2-naphthoate from chorismate: step 2/7. It participates in quinol/quinone metabolism; menaquinone biosynthesis. Functionally, catalyzes the thiamine diphosphate-dependent decarboxylation of 2-oxoglutarate and the subsequent addition of the resulting succinic semialdehyde-thiamine pyrophosphate anion to isochorismate to yield 2-succinyl-5-enolpyruvyl-6-hydroxy-3-cyclohexene-1-carboxylate (SEPHCHC). The sequence is that of 2-succinyl-5-enolpyruvyl-6-hydroxy-3-cyclohexene-1-carboxylate synthase from Natronomonas pharaonis (strain ATCC 35678 / DSM 2160 / CIP 103997 / JCM 8858 / NBRC 14720 / NCIMB 2260 / Gabara) (Halobacterium pharaonis).